Consider the following 173-residue polypeptide: Interferon gamma (173 aa).

The signal sequence occupies residues 1 to 22 (MNATHCILALQLCLLAISGCSS). Residue Q23 is modified to Pyrrolidone carboxylic acid. N38 and N105 each carry an N-linked (GlcNAc...) asparagine glycan.

It belongs to the type II (or gamma) interferon family. Homodimer. Interacts with IFNGR1 (via extracellular domain); this interaction promotes IFNGR1 dimerization. As to expression, released primarily from activated T lymphocytes.

Its subcellular location is the secreted. Type II interferon produced by immune cells such as T-cells and NK cells that plays crucial roles in antimicrobial, antiviral, and antitumor responses by activating effector immune cells and enhancing antigen presentation. Primarily signals through the JAK-STAT pathway after interaction with its receptor IFNGR1 to affect gene regulation. Upon IFNG binding, IFNGR1 intracellular domain opens out to allow association of downstream signaling components JAK2, JAK1 and STAT1, leading to STAT1 activation, nuclear translocation and transcription of IFNG-regulated genes. Many of the induced genes are transcription factors such as IRF1 that are able to further drive regulation of a next wave of transcription. Plays a role in class I antigen presentation pathway by inducing a replacement of catalytic proteasome subunits with immunoproteasome subunits. In turn, increases the quantity, quality, and repertoire of peptides for class I MHC loading. Increases the efficiency of peptide generation also by inducing the expression of activator PA28 that associates with the proteasome and alters its proteolytic cleavage preference. Up-regulates as well MHC II complexes on the cell surface by promoting expression of several key molecules such as cathepsins B/CTSB, H/CTSH, and L/CTSL. Participates in the regulation of hematopoietic stem cells during development and under homeostatic conditions by affecting their development, quiescence, and differentiation. The polypeptide is Interferon gamma (IFNG) (Meriones unguiculatus (Mongolian jird)).